We begin with the raw amino-acid sequence, 714 residues long: Neutral ceramidase A (714 aa).

The signal sequence occupies residues Met1–Ala23. 2 N-linked (GlcNAc...) asparagine glycosylation sites follow: Asn218 and Asn246. The Nucleophile role is filled by Ser293. Asn353, Asn373, Asn416, Asn571, Asn610, and Asn700 each carry an N-linked (GlcNAc...) asparagine glycan.

It belongs to the neutral ceramidase family.

It is found in the secreted. It catalyses the reaction an N-acylsphing-4-enine + H2O = sphing-4-enine + a fatty acid. In terms of biological role, hydrolyzes the sphingolipid ceramide into sphingosine and free fatty acid at an optimal pH of 3.0. Has no activity toward glycosphingolipids, such as GalCer and Galbeta1-3GalNAcbeta1-4(NeuAcalpha2-3)Galbeta1-4Glcbeta1-1'Cer or sphingomyelin. The chain is Neutral ceramidase A (dcd2A) from Dictyostelium discoideum (Social amoeba).